Consider the following 351-residue polypeptide: Mediator of RNA polymerase II transcription subunit 4 (351 aa).

Residues Gln-30–Ser-68 adopt a coiled-coil conformation. Disordered regions lie at residues Thr-156–Leu-217 and Pro-256–Asp-351. The segment covering Asn-163–Ile-177 has biased composition (polar residues). The segment covering Pro-182–Pro-198 has biased composition (low complexity). Positions Arg-257–Arg-308 are enriched in basic and acidic residues. The stretch at Ala-262 to Asn-311 forms a coiled coil. The span at Ala-340–Asp-351 shows a compositional bias: acidic residues.

This sequence belongs to the Mediator complex subunit 4 family. Component of the Mediator complex.

The protein localises to the nucleus. In terms of biological role, component of the Mediator complex, a coactivator involved in the regulated transcription of nearly all RNA polymerase II-dependent genes. Mediator functions as a bridge to convey information from gene-specific regulatory proteins to the basal RNA polymerase II transcription machinery. Mediator is recruited to promoters by direct interactions with regulatory proteins and serves as a scaffold for the assembly of a functional preinitiation complex with RNA polymerase II and the general transcription factors. The chain is Mediator of RNA polymerase II transcription subunit 4 (MED4) from Chaetomium globosum (strain ATCC 6205 / CBS 148.51 / DSM 1962 / NBRC 6347 / NRRL 1970) (Soil fungus).